Reading from the N-terminus, the 319-residue chain is Alpha-hemolysin (319 aa).

Positions 1–26 (MKTRIVSSVTTTLLLGSILMNPVAGA) are cleaved as a signal peptide.

Belongs to the aerolysin family. As to quaternary structure, self-assembles to first form a non-lytic oligomeric intermediate, and then, a mushroom-shaped homoheptamer structure of 100 Angstroms in length and up to 100 Angstroms in diameter. Interacts with human ADAM10; this interaction is required for toxin pore formation, disruption of focal adhesions, and hly-mediated cytotoxicity.

It localises to the secreted. Its function is as follows. Alpha-toxin binds to the membrane of eukaryotic cells (particularly red blood cells, RBC) forming pores, resulting in hemolysis, with the release of low-molecular weight molecules leading to eventual osmotic RBC lysis. Human RBCs bind much less alpha-toxin than do rabbit RBCs. Heptamer oligomerization and pore formation is required for lytic activity. The sequence is that of Alpha-hemolysin (hly) from Staphylococcus aureus.